The primary structure comprises 450 residues: Glucose-6-phosphate isomerase (450 aa).

Position 38 is a phosphothreonine (Thr-38). The active-site Proton donor is Glu-290. Residues His-311 and Lys-425 contribute to the active site.

The protein belongs to the GPI family.

The protein resides in the cytoplasm. It carries out the reaction alpha-D-glucose 6-phosphate = beta-D-fructose 6-phosphate. It functions in the pathway carbohydrate biosynthesis; gluconeogenesis. Its pathway is carbohydrate degradation; glycolysis; D-glyceraldehyde 3-phosphate and glycerone phosphate from D-glucose: step 2/4. In terms of biological role, catalyzes the reversible isomerization of glucose-6-phosphate to fructose-6-phosphate. The protein is Glucose-6-phosphate isomerase of Bacillus licheniformis (strain ATCC 14580 / DSM 13 / JCM 2505 / CCUG 7422 / NBRC 12200 / NCIMB 9375 / NCTC 10341 / NRRL NRS-1264 / Gibson 46).